A 361-amino-acid polypeptide reads, in one-letter code: P2Y purinoceptor 4 (361 aa).

Residues 1–30 are Extracellular-facing; the sequence is MTSADSLLFTSLGPSPSSGDGDCKFNEEFK. The helical transmembrane segment at 31 to 58 threads the bilayer; the sequence is FILLPLSYAVVFVLGLALNAPTLWLFLF. Residues 59–68 are Cytoplasmic-facing; sequence RLRPWDATAT. A helical membrane pass occupies residues 69-91; it reads YMFHLALSDTLYVLSLPTLVYYY. At 92 to 108 the chain is on the extracellular side; the sequence is AARNHWPFGTGFCKFVR. Cys-104 and Cys-181 form a disulfide bridge. A helical transmembrane segment spans residues 109-127; it reads FLFYWNLYCSVLFLTCISV. Residues 128–149 lie on the Cytoplasmic side of the membrane; that stretch reads HRYMGICHPLRAIRWGRPRFAG. Residues 150 to 170 form a helical membrane-spanning segment; the sequence is LLCLGVWLVVAGCLVPNLFFV. Over 171–192 the chain is Extracellular; it reads TTNANGTTILCHDTTLPEEFDH. The N-linked (GlcNAc...) asparagine glycan is linked to Asn-175. The helical transmembrane segment at 193–218 threads the bilayer; sequence YVYFSSTIMVLLFGFPFLITLVCYGL. Topologically, residues 219-242 are cytoplasmic; it reads MARRLYRPLPGAGQSSSRLRSLRT. Residues 243-265 traverse the membrane as a helical segment; sequence IAVVLTVFAVCFVPFHITRTIYY. Residues 266–283 are Extracellular-facing; the sequence is LARLLNAECRVLNIVNVV. Residues 284-305 form a helical membrane-spanning segment; the sequence is YKVTRPLASANSCLDPVLYLFT. At 306–361 the chain is on the cytoplasmic side; it reads GDKYRNQLQQLCRGSTPKRRTTASSLALVTLHEESISRWADIHQDSIFPAYEGDRL.

This sequence belongs to the G-protein coupled receptor 1 family. Phosphorylation of Ser-329 and Ser-330 is a key step in agonist-dependent desensitization and loss of surface P2RY4. This phosphorylation does not involve PKC, nor other calcium-activated kinases. In terms of tissue distribution, expressed in the liver, intestine, stomach, bladder and lung.

It is found in the cell membrane. Its function is as follows. Receptor for ATP and UTP coupled to G-proteins that activate a phosphatidylinositol-calcium second messenger system. This is P2Y purinoceptor 4 (P2ry4) from Mus musculus (Mouse).